A 336-amino-acid polypeptide reads, in one-letter code: Galactose/methyl galactoside import permease protein MglC (336 aa).

Residues 1–16 lie on the Periplasmic side of the membrane; sequence MSALNKKSFLTYLKEG. A helical membrane pass occupies residues 17 to 37; it reads GIYVVLLVLLAIIIFQDPTFL. The Cytoplasmic portion of the chain corresponds to 38-52; the sequence is SLLNLSNILTQSSVR. The helical transmembrane segment at 53-73 threads the bilayer; it reads IIIALGVAGLIVTQGTDLSAG. The Periplasmic segment spans residues 74 to 106; sequence RQVGLAAVVAATLLQSMDNANKVFPEMATMPIA. 2 consecutive transmembrane segments (helical) span residues 107–127 and 128–148; these read LVIL…GLII and AYLN…VYGI. The Periplasmic portion of the chain corresponds to 149-180; sequence NSLYYDFVGASPISGFDSGFSTFAQGFVALGS. Residues 181-201 form a helical membrane-spanning segment; that stretch reads FRLSYITFYALIAVAFVWVLW. Over 202 to 226 the chain is Cytoplasmic; the sequence is NKTRFGKNIFAIGGNPEAAKVSGVN. Residues 227–247 form a helical membrane-spanning segment; it reads VGLNLLMIYALSGVFYAFGGM. Residues 248-256 lie on the Periplasmic side of the membrane; it reads LEAGRIGSA. Residues 257-277 form a helical membrane-spanning segment; it reads TNNLGFMYELDAIAACVVGGV. Residue Ser278 is a topological domain, cytoplasmic. Residues 279–299 traverse the membrane as a helical segment; sequence FSGGVGTVIGVVTGVIIFTVI. The Periplasmic segment spans residues 300–305; it reads NYGLTY. Residues 306 to 326 form a helical membrane-spanning segment; that stretch reads IGVNPYWQYIIKGAIIIFAVA. The Cytoplasmic segment spans residues 327–336; that stretch reads LDSLKYARKK.

Belongs to the binding-protein-dependent transport system permease family. AraH/RbsC subfamily. The complex is composed of one ATP-binding protein (MglA), two transmembrane proteins (MglC) and a solute-binding protein (MglB).

It is found in the cell inner membrane. Part of the ABC transporter complex MglABC involved in galactose/methyl galactoside import. Probably responsible for the translocation of the substrate across the membrane. This chain is Galactose/methyl galactoside import permease protein MglC (mglC), found in Escherichia coli (strain K12).